The sequence spans 314 residues: tRNA dimethylallyltransferase 1 (314 aa).

8–15 (GPTGSGKS) contacts ATP. 10–15 (TGSGKS) is a binding site for substrate.

Belongs to the IPP transferase family. Monomer. Mg(2+) is required as a cofactor.

The enzyme catalyses adenosine(37) in tRNA + dimethylallyl diphosphate = N(6)-dimethylallyladenosine(37) in tRNA + diphosphate. Catalyzes the transfer of a dimethylallyl group onto the adenine at position 37 in tRNAs that read codons beginning with uridine, leading to the formation of N6-(dimethylallyl)adenosine (i(6)A). The protein is tRNA dimethylallyltransferase 1 of Mycobacterium ulcerans (strain Agy99).